We begin with the raw amino-acid sequence, 235 residues long: 15,16-dihydrobiliverdin:ferredoxin oxidoreductase (235 aa).

The protein belongs to the HY2 family.

It carries out the reaction 15,16-dihydrobiliverdin + oxidized 2[4Fe-4S]-[ferredoxin] = biliverdin IXalpha + reduced 2[4Fe-4S]-[ferredoxin] + 2 H(+). Catalyzes the two-electron reduction of biliverdin IX-alpha at the C15 methine bridge. This chain is 15,16-dihydrobiliverdin:ferredoxin oxidoreductase, found in Synechococcus sp. (strain CC9902).